The sequence spans 603 residues: Sulfoacetaldehyde acetyltransferase (603 aa).

It belongs to the TPP enzyme family. In terms of assembly, homodimer or homotetramer. Requires Mg(2+) as cofactor. Thiamine diphosphate is required as a cofactor.

It localises to the cytoplasm. It catalyses the reaction acetyl phosphate + sulfite + H(+) = sulfoacetaldehyde + phosphate. The protein operates within organosulfur degradation; taurine degradation via aerobic pathway; acetyl phosphate and sulfite from taurine: step 2/2. This Alcaligenes xylosoxydans xylosoxydans (Achromobacter xylosoxidans) protein is Sulfoacetaldehyde acetyltransferase (xsc).